A 2063-amino-acid polypeptide reads, in one-letter code: MVLDDLPNLEDIYTSLCSSTMEDSEMDFDSGLEDDDTKSDSILEDSTIFVAFKGNIDDKDFKWKLDAILKNVPNLLHMESSKLKVQKVEPWNSVRVTFNIPREAAERLRILAQSNNQQLRDLGILSVQIEGEGAINLALAQNRSQDVRMNGPMGAGNSVRMEAGFPMASGPGIIRMNNPATVMIPPGGNVSSSMMAPGPNPELQPRTPRPASQSDAMDPLLSGLHIQQQSHPSGSLAPPHHPMQPVSVNRQMNPANFPQLQQQQQQQQQQQQQQQQQQQQQQQQQLQARPPQQHQQQQPQGIRPQFTAPTQVPVPPGWNQLPSGALQPPPAQGSLGTMTANQGWKKAPLPGPMQQQLQARPSLATVQTPSHPPPPYPFGSQQASQAHTNFPQMSNPGQFTAPQMKSLQGGPSRVPTPLQQPHLTNKSPASSPSSFQQGSPASSPTVNQTQQQMGPRPPQNNPLPQGFQQPVSSPGRNPMVQQGNVPPNFMVMQQQPPNQGPQSLHPGLGGMPKRLPPGFSAGQANPNFMQGQVPSTTATTPGNSGAPQLQANQNVQHAGGQGAGPPQNQMQVSHGPPNMMQPSLMGIHGNMNNQQAGTSGVPQVNLSNMQGQPQQGPPSQLMGMHQQIVPSQGQMVQQQGTLNPQNPMILSRAQLMPQGQMMVNPPSQNLGPSPQRMTPPKQMLSQQGPQMMAPHNQMMGPQGQVLLQQNPMIEQIMTNQMQGNKQQFNTQNQSNVMPGPAQIMRGPTPNMQGNMVQFTGQMSGQMLPQQGPVNNSPSQVMGIQGQVLRPPGPSPHMAQQHGDPATTANNDVSLSQMMPDVSIQQTNMVPPHVQAMQGNSASGNHFSGHGMSFNAPFSGAPNGNQMSCGQNPGFPVNKDVTLTSPLLVNLLQSDISAGHFGVNNKQNNTNANKPKKKKPPRKKKNSQQDLNTPDTRPAGLEEADQPPLPGEQGINLDNSGPKLPEFSNRPPGYPSQPVEQRPLQQMPPQLMQHVAPPPQPPQQQPQPQLPQQQQPPPPSQPQSQQQQQQQQQMMMMLMMQQDPKSVRLPVSQNVHPPRGPLNPDSQRMPMQQSGSVPVMVSLQGPASVPPSPDKQRMPMPVNTPLGSNSRKMVYQESPQNPSSSPLAEMASLPEASGSEAPSVPGGPNNMPSHVVLPQNQLMMTGPKPGPSPLSATQGATPQQPPVNSLPSSHGHHFPNVAAPTQTSRPKTPNRASPRPYYPQTPNNRPPSTEPSEISLSPERLNASIAGLFPPQINIPLPPRPNLNRGFDQQGLNPTTLKAIGQAPSNLTMNPSNFATPQTHKLDSVVVNSGKQSNSGATKRASPSNSRRSSPGSSRKTTPSPGRQNSKAPKLTLASQTNAALLQNVELPRNVLVSPTPLANPPVPGSFPNNSGLNPQNSTVSVAAVGGVVEDNKESLNVPQDSDCQNSQSRKEQVNIELKAVPAQEVKMVVPEDQSKKDGQPSDPNKLPSVEENKNLVSPAMREAPTSLSQLLDNSGAPNVTIKPPGLTDLEVTPPVVSGEDLKKASVIPTLQDLSSSKEPSNSLNLPHSNELCSSLVHPELSEVSSNVAPSIPPVMSRPVSSSSISTPLPPNQITVFVTSNPITTSANTSAALPTHLQSALMSTVVTMPNAGSKVMVSEGQSAAQSNARPQFITPVFINSSSIIQVMKGSQPSTIPAAPLTTNSGLMPPSVAVVGPLHIPQNIKFSSAPVPPNALSSSPAPNIQTGRPLVLSSRATPVQLPSPPCTSSPVVPSHPPVQQVKELNPDEASPQVNTSADQNTLPSSQSTTMVSPLLTNSPGSSGNRRSPVSSSKGKGKVDKIGQILLTKACKKVTGSLEKGEEQYGADGETEGQGLDTTAPGLMGTEQLSTELDSKTPTPPAPTLLKMTSSPVGPGTASAGPSLPGGALPTSVRSIVTTLVPSELISAVPTTKSNHGGIASESLAGGLVEEKVGSHPELLPSIAPSQNLVSKETSTTALQASVARPELEVNAAIVSGQSSEPKEIVEKSKIPGRRNSRTEEPTVASESVENGHRKRSSRPASASSSTKDITSAVQSKRRKSK.

Residues 1 to 928 (MVLDDLPNLE…PPRKKKNSQQ (928 aa)) form a TBP/GTF2A-binding region region. Residues 1–1057 (MVLDDLPNLE…LPVSQNVHPP (1057 aa)) are CREBBP-binding region. The NCOA1-binding region stretch occupies residues 1 to 1310 (MVLDDLPNLE…QTHKLDSVVV (1310 aa)). The residue at position 95 (R95) is an Asymmetric dimethylarginine. Disordered regions lie at residues 184 to 251 (IPPG…VNRQ), 281 to 549 (QQQQ…APQL), and 789 to 811 (RPPG…ANND). Residues 281–300 (QQQQQLQARPPQQHQQQQPQ) show a composition bias toward low complexity. 5 stretches are compositionally biased toward polar residues: residues 353-368 (MQQQ…TVQT), 379-406 (GSQQ…QMKS), 417-453 (PLQQ…QQQM), 462-502 (PLPQ…QGPQ), and 522-549 (GQAN…APQL). The NCOA6IP-binding region stretch occupies residues 773-927 (VNNSPSQVMG…KPPRKKKNSQ (155 aa)). At S884 the chain carries Phosphoserine; by MAPK; in vitro. Positions 887–891 (LVNLL) match the LXXLL motif 1 motif. 3 disordered regions span residues 899-1278 (HFGV…LNPT), 1310-1353 (VNSG…KAPK), and 1448-1474 (EVKM…PSVE). Residues 903 to 912 (NNKQNNTNAN) show a composition bias toward low complexity. Over residues 913–925 (KPKKKKPPRKKKN) the composition is skewed to basic residues. Low complexity predominate over residues 982–992 (PLQQMPPQLMQ). Positions 995 to 1020 (APPPQPPQQQPQPQLPQQQQPPPPSQ) are enriched in pro residues. Positions 1021 to 1041 (PQSQQQQQQQQQMMMMLMMQQ) are enriched in low complexity. An asymmetric dimethylarginine mark is found at R1047 and R1058. Over residues 1063–1075 (PDSQRMPMQQSGS) the composition is skewed to polar residues. Position 1096 is an asymmetric dimethylarginine (R1096). 3 stretches are compositionally biased toward polar residues: residues 1104–1125 (PLGS…SSSP), 1173–1191 (LSAT…SLPS), and 1202–1214 (APTQ…TPNR). The segment covering 1219 to 1232 (PYYPQTPNNRPPST) has biased composition (pro residues). Polar residues predominate over residues 1310–1320 (VNSGKQSNSGA). Residues 1322–1345 (KRASPSNSRRSSPGSSRKTTPSPG) show a composition bias toward low complexity. Positions 1491 to 1495 (LSQLL) match the LXXLL motif 2 motif. The tract at residues 1641–2063 (SEGQSAAQSN…AVQSKRRKSK (423 aa)) is EP300/CRSP3-binding region. Residues 1738 to 1820 (ATPVQLPSPP…VSSSKGKGKV (83 aa)) form a disordered region. Low complexity predominate over residues 1750–1763 (SSPVVPSHPPVQQV). A compositionally biased stretch (polar residues) spans 1773–1798 (PQVNTSADQNTLPSSQSTTMVSPLLT). Positions 1799-1815 (NSPGSSGNRRSPVSSSK) are enriched in low complexity. An N6-acetyllysine mark is found at K1819 and K1822. Disordered regions lie at residues 1837–1908 (GSLE…LPGG) and 1995–2063 (IVSG…RKSK). A compositionally biased stretch (basic and acidic residues) spans 2002-2011 (EPKEIVEKSK). S2018 is modified (phosphoserine).

In terms of assembly, monomer and homodimer. Interacts with RBM39. Interacts in vitro with the basal transcription factors GTF2A and TBP, suggesting an autonomous transactivation function. Interacts with NCOA1, CRSP3, RBM14, the histone acetyltransferases EP300 and CREBBP, and with the methyltransferases NCOA6IP and PRMT2/HRMT1L1. Component of the MLL2/3 complex (also named ASCOM complex), at least composed of KMT2D/MLL2 or KMT2C/MLL3, ASH2L, RBBP5, WDR5, NCOA6, DPY30, KDM6A, PAXIP1/PTIP, PAGR1 and alpha- and beta-tubulin. Interacts with ZNF335; may enhance ligand-dependent transcriptional activation by nuclear hormone receptors. Post-translationally, phosphorylated by PRKDC. Phosphorylation on Ser-884 leads to a strong decrease in binding to ESR1 and ESR2. As to expression, ubiquitous. Highly expressed in brain, prostate, testis and ovary; weakly expressed in lung, thymus and small intestine.

It localises to the nucleus. Functionally, nuclear receptor coactivator that directly binds nuclear receptors and stimulates the transcriptional activities in a hormone-dependent fashion. Coactivates expression in an agonist- and AF2-dependent manner. Involved in the coactivation of different nuclear receptors, such as for steroids (GR and ERs), retinoids (RARs and RXRs), thyroid hormone (TRs), vitamin D3 (VDR) and prostanoids (PPARs). Probably functions as a general coactivator, rather than just a nuclear receptor coactivator. May also be involved in the coactivation of the NF-kappa-B pathway. May coactivate expression via a remodeling of chromatin and its interaction with histone acetyltransferase proteins. This is Nuclear receptor coactivator 6 (NCOA6) from Homo sapiens (Human).